The following is a 423-amino-acid chain: ATP-dependent Clp protease ATP-binding subunit ClpX (423 aa).

A ClpX-type ZB domain is found at 1–50 (MTDDTEYRCSFCGKEHHQVDDLIAGPDVRICSECVVLSCEIVEDRRNEAL). Zn(2+)-binding residues include Cys-9, Cys-12, Cys-31, and Cys-34. Position 126–133 (126–133 (PTGCGKTY)) interacts with ATP.

It belongs to the ClpX chaperone family. In terms of assembly, component of the ClpX-ClpP complex. Forms a hexameric ring that, in the presence of ATP, binds to fourteen ClpP subunits assembled into a disk-like structure with a central cavity, resembling the structure of eukaryotic proteasomes.

In terms of biological role, ATP-dependent specificity component of the Clp protease. It directs the protease to specific substrates. Can perform chaperone functions in the absence of ClpP. This is ATP-dependent Clp protease ATP-binding subunit ClpX from Tropheryma whipplei (strain TW08/27) (Whipple's bacillus).